The following is a 194-amino-acid chain: MNNVLVLKSSISGNNSQTNQLADYVIEKLQGNHIVVRDLAQQPLPYFDTVAAIAVRGEPKTTEEKQLLALSDELIEELKNAQTLIIGAPMYNLNIPTQLKSYFDFIARPRVTFQYTAKGPEGLLKGKKAIVLCAFGGLYDEENLVTQYMKSILGFIGITDVQFVYAQGIGLGAEAIEKAQSSAKNKINELITSL.

Residues serine 10 and methionine 90–leucine 93 contribute to the FMN site.

The protein belongs to the azoreductase type 1 family. Homodimer. It depends on FMN as a cofactor.

The catalysed reaction is 2 a quinone + NADH + H(+) = 2 a 1,4-benzosemiquinone + NAD(+). The enzyme catalyses N,N-dimethyl-1,4-phenylenediamine + anthranilate + 2 NAD(+) = 2-(4-dimethylaminophenyl)diazenylbenzoate + 2 NADH + 2 H(+). Quinone reductase that provides resistance to thiol-specific stress caused by electrophilic quinones. In terms of biological role, also exhibits azoreductase activity. Catalyzes the reductive cleavage of the azo bond in aromatic azo compounds to the corresponding amines. The chain is FMN-dependent NADH:quinone oxidoreductase from Haemophilus influenzae (strain PittEE).